The primary structure comprises 648 residues: DNA ligase (648 aa).

NAD(+) contacts are provided by residues 63–67 (DILYD) and 105–106 (ST). Catalysis depends on lysine 143, which acts as the N6-AMP-lysine intermediate. Arginine 159, glutamate 190, and lysine 302 together coordinate NAD(+). Residues cysteine 390, cysteine 393, cysteine 406, and cysteine 412 each coordinate Zn(2+). A BRCT domain is found at 570–648 (SLASPLTGKI…SEQEYLDLIS (79 aa)).

Belongs to the NAD-dependent DNA ligase family. LigA subfamily. Requires Mg(2+) as cofactor. Mn(2+) serves as cofactor.

The catalysed reaction is NAD(+) + (deoxyribonucleotide)n-3'-hydroxyl + 5'-phospho-(deoxyribonucleotide)m = (deoxyribonucleotide)n+m + AMP + beta-nicotinamide D-nucleotide.. In terms of biological role, DNA ligase that catalyzes the formation of phosphodiester linkages between 5'-phosphoryl and 3'-hydroxyl groups in double-stranded DNA using NAD as a coenzyme and as the energy source for the reaction. It is essential for DNA replication and repair of damaged DNA. The protein is DNA ligase of Shewanella baltica (strain OS155 / ATCC BAA-1091).